Reading from the N-terminus, the 828-residue chain is Periplasmic nitrate reductase (828 aa).

The segment at residues 1–31 (MKLSRRSFMKANAVAAAAAAAGLSVPGVARA) is a signal peptide (tat-type signal). In terms of domain architecture, 4Fe-4S Mo/W bis-MGD-type spans 39 to 95 (IKWDKAPCRFCGTGCGVLVGTQQGRIVACQGDPDAPVNRGLNCIKGYFLPKIMYGKD). Residues Cys-46, Cys-49, Cys-53, and Cys-81 each coordinate [4Fe-4S] cluster. Mo-bis(molybdopterin guanine dinucleotide) contacts are provided by residues Lys-83, Gln-150, Asn-175, Cys-179, 212–219 (WGSNMAEM), 243–247 (STFQH), 262–264 (QSD), Met-372, Gln-376, Asn-482, 508–509 (SD), Lys-531, Asp-558, and 718–727 (TGRVLEHWHT). Phe-794 serves as a coordination point for substrate. Mo-bis(molybdopterin guanine dinucleotide) contacts are provided by Asn-802 and Lys-819.

This sequence belongs to the prokaryotic molybdopterin-containing oxidoreductase family. NasA/NapA/NarB subfamily. Component of the periplasmic nitrate reductase NapAB complex composed of NapA and NapB. It depends on [4Fe-4S] cluster as a cofactor. Mo-bis(molybdopterin guanine dinucleotide) is required as a cofactor. In terms of processing, predicted to be exported by the Tat system. The position of the signal peptide cleavage has not been experimentally proven.

It is found in the periplasm. It carries out the reaction 2 Fe(II)-[cytochrome] + nitrate + 2 H(+) = 2 Fe(III)-[cytochrome] + nitrite + H2O. In terms of biological role, catalytic subunit of the periplasmic nitrate reductase complex NapAB. Receives electrons from NapB and catalyzes the reduction of nitrate to nitrite. This is Periplasmic nitrate reductase from Citrobacter koseri (strain ATCC BAA-895 / CDC 4225-83 / SGSC4696).